Reading from the N-terminus, the 516-residue chain is NADH-quinone oxidoreductase subunit N (516 aa).

14 helical membrane-spanning segments follow: residues 12 to 32 (LLPAYLAAGTAVLVLLADLLV), 37 to 57 (VTISVAALGALATAAGAVLVG), 81 to 101 (LVAVLVALLTLGVLGLSGPLL), 108 to 128 (VGEYCFLLAASMTGGVALGAA), 131 to 151 (LITLIVALETLTLPLYVLVGL), 163 to 183 (VTFFVVSVVATTLTLLGAALL), 213 to 233 (VAVALVVVGLTVKVAAVPFHA), 246 to 266 (VAAYLSTVSKLGGVVALLAVV), 274 to 294 (ITGLVLALLAVLTMTVGNLVA), 303 to 323 (LLAWSSVAQAGYILAPLGALA), 341 to 361 (VAYTVFFVVLELAAFAAVVAL), 386 to 406 (VGLALALVGLAGLPPGLAGLF), 419 to 439 (GAAGLALVVAVNAVLGLAYYL), and 491 to 511 (VVLAAATVVALVVGFAPQLVL).

It belongs to the complex I subunit 2 family. NDH-1 is composed of 14 different subunits. Subunits NuoA, H, J, K, L, M, N constitute the membrane sector of the complex.

Its subcellular location is the cell membrane. The catalysed reaction is a quinone + NADH + 5 H(+)(in) = a quinol + NAD(+) + 4 H(+)(out). NDH-1 shuttles electrons from NADH, via FMN and iron-sulfur (Fe-S) centers, to quinones in the respiratory chain. The immediate electron acceptor for the enzyme in this species is believed to be a menaquinone. Couples the redox reaction to proton translocation (for every two electrons transferred, four hydrogen ions are translocated across the cytoplasmic membrane), and thus conserves the redox energy in a proton gradient. This chain is NADH-quinone oxidoreductase subunit N, found in Salinispora tropica (strain ATCC BAA-916 / DSM 44818 / JCM 13857 / NBRC 105044 / CNB-440).